The primary structure comprises 310 residues: Nucleotide-binding protein BLA_1368 (310 aa).

The interval 1-21 (MQSARNEQRGTGPESPHAASP) is disordered. Residue 32–39 (GMSGAGRS) participates in ATP binding. 83–86 (DVRS) is a GTP binding site.

This sequence belongs to the RapZ-like family.

Displays ATPase and GTPase activities. This chain is Nucleotide-binding protein BLA_1368, found in Bifidobacterium animalis subsp. lactis (strain AD011).